The chain runs to 133 residues: Vascular endothelial growth factor homolog (133 aa).

The first 20 residues, 1 to 20 (MKLLVGILVAVCLHQYLLNA), serve as a signal peptide directing secretion. Cystine bridges form between Cys-36–Cys-78, Cys-67–Cys-112, and Cys-71–Cys-114. N-linked (GlcNAc...) asparagine; by host glycosylation occurs at Asn-85.

This sequence belongs to the PDGF/VEGF growth factor family. Homodimer; disulfide-linked.

The protein resides in the secreted. Functionally, induces endothelial proliferation. This chain is Vascular endothelial growth factor homolog, found in Orf virus (strain NZ2) (OV NZ-2).